The chain runs to 1446 residues: ABC-type transporter oblD (1446 aa).

Residues Asn-9, Asn-28, Asn-222, Asn-281, and Asn-305 are each glycosylated (N-linked (GlcNAc...) asparagine). Residues 104–357 (LEVLSLVSKA…FLDMGFVCPD (254 aa)) form the ABC transporter 1 domain. 6 helical membrane passes run 468–488 (VTISSVFGNTIISLVIASIFY), 502–522 (ALLFFAVLMNALGCGLEMLTL), 548–568 (MIMDLPYKIINAITSNIVLYF), 577–597 (GAFFFFVFTSFVLTLTMSMFF), 610–630 (ALPFSAVLLLGLSMYTGFTIP), and 719–739 (IGVIFAYMFLLAAVYLVATDF). In terms of domain architecture, ABC transporter 2 spans 796 to 1038 (FQWKDVCFDI…ILIDYFVRNG (243 aa)). Residue 832–839 (GVSGAGKT) coordinates ATP. Transmembrane regions (helical) follow at residues 1147-1167 (ALCVLSALFVGFSLFHTPNTI), 1177-1197 (IFMLLTVFGQLIQQIMPHFVA), 1217-1237 (FIISNIVVELPWNSLMSVLMF), 1265-1285 (LMVWTFLLFSSTFAHFMIAAF), and 1301-1321 (LCLIFCGVLATPGQLPGFWIF). Asn-1344 and Asn-1359 each carry an N-linked (GlcNAc...) asparagine glycan. A helical transmembrane segment spans residues 1412-1432 (FGLMWVFIVFNIFAACLLYWW).

The protein belongs to the ABC transporter superfamily. ABCG family. PDR (TC 3.A.1.205) subfamily.

It localises to the cell membrane. ABC-type transporter; part of the gene cluster that mediates the biosynthesis of the sesterterpenes ophiobolins, fungal phytotoxins with potential anti-cancer activities. Acts as a specific transporter involved in ophiobolins secretion. This Aspergillus clavatus (strain ATCC 1007 / CBS 513.65 / DSM 816 / NCTC 3887 / NRRL 1 / QM 1276 / 107) protein is ABC-type transporter oblD.